The following is a 92-amino-acid chain: Acylphosphatase (92 aa).

An intrachain disulfide couples C5 to C49. Residues 5 to 92 (CIIAWVYGRV…SGELTDFRIR (88 aa)) enclose the Acylphosphatase-like domain. Active-site residues include R20 and N38.

Belongs to the acylphosphatase family.

It catalyses the reaction an acyl phosphate + H2O = a carboxylate + phosphate + H(+). The sequence is that of Acylphosphatase from Escherichia coli O6:H1 (strain CFT073 / ATCC 700928 / UPEC).